The chain runs to 255 residues: Small ribosomal subunit protein uS2 (255 aa).

Positions 232–255 (ASGRDIGASEEAPIEPALEDEAGA) are disordered.

It belongs to the universal ribosomal protein uS2 family.

The protein is Small ribosomal subunit protein uS2 of Agrobacterium fabrum (strain C58 / ATCC 33970) (Agrobacterium tumefaciens (strain C58)).